Consider the following 31-residue polypeptide: Delta-actitoxin-Dar1b (31 aa).

It belongs to the sea anemone short toxin (type III) family. In terms of processing, contains 4 disulfide bonds.

It is found in the secreted. Its subcellular location is the nematocyst. In terms of biological role, binds specifically to voltage-gated sodium channels (Nav), thereby delaying their inactivation during signal transduction. The chain is Delta-actitoxin-Dar1b from Dofleinia armata (Armed anemone).